The chain runs to 372 residues: Lipid-A-disaccharide synthase (372 aa).

It belongs to the LpxB family.

The catalysed reaction is a lipid X + a UDP-2-N,3-O-bis[(3R)-3-hydroxyacyl]-alpha-D-glucosamine = a lipid A disaccharide + UDP + H(+). The protein operates within bacterial outer membrane biogenesis; LPS lipid A biosynthesis. Condensation of UDP-2,3-diacylglucosamine and 2,3-diacylglucosamine-1-phosphate to form lipid A disaccharide, a precursor of lipid A, a phosphorylated glycolipid that anchors the lipopolysaccharide to the outer membrane of the cell. The sequence is that of Lipid-A-disaccharide synthase from Thiobacillus denitrificans (strain ATCC 25259 / T1).